A 1014-amino-acid chain; its full sequence is Resistance to glucose repression protein 1 (1014 aa).

Residues 1–63 are disordered; it reads MSTNLANYFA…AVQAKNDDDF (63 aa). At Ser-2 the chain carries N-acetylserine. The span at 11-34 shows a compositional bias: basic and acidic residues; the sequence is GKKDIENEHVNRNASHESNSKSDV. Thr-73 bears the Phosphothreonine mark. Ser-75 is subject to Phosphoserine. 2 disordered regions span residues 90–144 and 236–270; these read LGRS…YLIP and SEGN…KNSK. Low complexity predominate over residues 104 to 115; sequence YDNSSNNSSSNS. A phosphoserine mark is found at Ser-242 and Ser-254. Over residues 247–260 the composition is skewed to basic and acidic residues; sequence DLERGYGSDDENSK. The Nuclear localization signal signature appears at 277–283; it reads KPILKKR. Phosphoserine is present on Ser-311. A disordered region spans residues 340 to 463; it reads YPKESNSSVS…SEKSNKPTKN (124 aa). 4 stretches are compositionally biased toward polar residues: residues 343–352, 361–370, 389–407, and 415–455; these read ESNSSVSLKS, STIPNPVGEN, HVQN…LENS, and LDQN…NPSE. Ser-421 is subject to Phosphoserine. Residue Tyr-480 is modified to Phosphotyrosine. Ser-490 is modified (phosphoserine). Disordered stretches follow at residues 531–557 and 570–591; these read EHLN…DEEH and SDSG…TTSR. Ser-570, Ser-572, and Ser-576 each carry phosphoserine. The segment covering 578–591 has biased composition (polar residues); sequence ITDNSSVASSTTSR. Residues 595–599 carry the Nuclear localization signal motif; it reads RPIIK. Phosphoserine is present on residues Ser-610, Ser-614, and Ser-680. Residues 690–897 are disordered; the sequence is SKEKHVPQLH…QSFRIVNNTP (208 aa). A compositionally biased stretch (low complexity) spans 722 to 740; sequence YSSSSDSEQQFIEDSQYNS. Residues 741-758 show a composition bias toward acidic residues; the sequence is SDDEEEEDDDDQEVDDNH. Composition is skewed to polar residues over residues 770 to 802 and 822 to 833; these read LGKS…NFTG and RNSSSGNFIFNS. The Nuclear localization signal signature appears at 873–879; it reads KKKALPK. Residues 884–897 show a composition bias toward polar residues; the sequence is SDSSQSFRIVNNTP. Phosphothreonine is present on Thr-896. At Ser-898 the chain carries Phosphoserine. Positions 959 to 972 are enriched in basic and acidic residues; the sequence is KKVDSVQTTRKEAS. Positions 959-982 are disordered; it reads KKVDSVQTTRKEASLTDSSNESLH. Phosphoserine is present on Ser-980.

As to quaternary structure, interacts with SAK1.

The protein resides in the nucleus. Functionally, involved in RNA processing and negative regulation of glucose repression. Regulates the level of two antigens, P43 and P70. Binds to protein phosphatase type 1. Functions with REG2 and SNF1 protein kinase to regulate growth. Might regulate SNF1 directly or indirectly. The chain is Resistance to glucose repression protein 1 (REG1) from Saccharomyces cerevisiae (strain ATCC 204508 / S288c) (Baker's yeast).